We begin with the raw amino-acid sequence, 196 residues long: Pyridoxine/pyridoxamine 5'-phosphate oxidase (196 aa).

K49 contributes to the substrate binding site. Positions 66 and 88 each coordinate FMN. Residues Y106, R110, and S114 each coordinate substrate. Residues 123 to 124 and W168 contribute to the FMN site; that span reads QS. Position 174–176 (174–176) interacts with substrate; sequence RLH. R178 contacts FMN.

It belongs to the pyridoxamine 5'-phosphate oxidase family. In terms of assembly, homodimer. FMN serves as cofactor.

It carries out the reaction pyridoxamine 5'-phosphate + O2 + H2O = pyridoxal 5'-phosphate + H2O2 + NH4(+). It catalyses the reaction pyridoxine 5'-phosphate + O2 = pyridoxal 5'-phosphate + H2O2. It functions in the pathway cofactor metabolism; pyridoxal 5'-phosphate salvage; pyridoxal 5'-phosphate from pyridoxamine 5'-phosphate: step 1/1. Its pathway is cofactor metabolism; pyridoxal 5'-phosphate salvage; pyridoxal 5'-phosphate from pyridoxine 5'-phosphate: step 1/1. Its function is as follows. Catalyzes the oxidation of either pyridoxine 5'-phosphate (PNP) or pyridoxamine 5'-phosphate (PMP) into pyridoxal 5'-phosphate (PLP). This Bdellovibrio bacteriovorus (strain ATCC 15356 / DSM 50701 / NCIMB 9529 / HD100) protein is Pyridoxine/pyridoxamine 5'-phosphate oxidase.